A 464-amino-acid polypeptide reads, in one-letter code: Protein FAM90A7 (464 aa).

Disordered stretches follow at residues 1-42 (MMAR…DPRL), 69-387 (VPAT…AGHD), and 410-437 (AAPSFHSPEKPGAFLAQSPHVSEKSEAP). Basic and acidic residues-rich tracts occupy residues 74–89 (GKKEGKENLKPWKPRA) and 97–111 (NKDKGEKEERPRQQD). The segment covering 180–197 (LASLSPLRKASLSSSSSL) has biased composition (low complexity).

The protein belongs to the FAM90 family.

The sequence is that of Protein FAM90A7 from Homo sapiens (Human).